We begin with the raw amino-acid sequence, 153 residues long: UPF0756 membrane protein LSEI_1366 (153 aa).

4 helical membrane passes run 4 to 24, 52 to 72, 85 to 105, and 115 to 135; these read WLFL…SLII, WGVT…EIGF, WIAI…VGLL, and LVFG…GPVI.

The protein belongs to the UPF0756 family.

It localises to the cell membrane. The sequence is that of UPF0756 membrane protein LSEI_1366 from Lacticaseibacillus paracasei (strain ATCC 334 / BCRC 17002 / CCUG 31169 / CIP 107868 / KCTC 3260 / NRRL B-441) (Lactobacillus paracasei).